The sequence spans 308 residues: Glutaminase (308 aa).

Residues Ser-65, Asn-116, Glu-161, Asn-168, Tyr-192, Tyr-244, and Val-262 each contribute to the substrate site.

Belongs to the glutaminase family. Homotetramer.

It carries out the reaction L-glutamine + H2O = L-glutamate + NH4(+). The polypeptide is Glutaminase (Geobacillus kaustophilus (strain HTA426)).